We begin with the raw amino-acid sequence, 311 residues long: Cell division protein FtsQ (311 aa).

The segment at Met-1–Pro-28 is disordered. Over Met-1–Lys-46 the chain is Cytoplasmic. A helical transmembrane segment spans residues Ala-47–Asp-67. The Periplasmic segment spans residues Glu-68–Gly-311. Residues Phe-91–Arg-159 enclose the POTRA domain.

This sequence belongs to the FtsQ/DivIB family. FtsQ subfamily.

Its subcellular location is the cell inner membrane. Essential cell division protein. This is Cell division protein FtsQ from Jannaschia sp. (strain CCS1).